Reading from the N-terminus, the 341-residue chain is Large ribosomal subunit protein uL10 (341 aa).

The tract at residues 301-341 is disordered; that stretch reads EAAPAAAPAAEEKAEEEKKEEEEEKKEDQELSGLDSIFGGF.

This sequence belongs to the universal ribosomal protein uL10 family. As to quaternary structure, part of the 50S ribosomal subunit. Forms part of the ribosomal stalk which helps the ribosome interact with GTP-bound translation factors. Forms a heptameric L10(L12)2(L12)2(L12)2 complex, where L10 forms an elongated spine to which the L12 dimers bind in a sequential fashion.

Functionally, forms part of the ribosomal stalk, playing a central role in the interaction of the ribosome with GTP-bound translation factors. This is Large ribosomal subunit protein uL10 from Aeropyrum pernix (strain ATCC 700893 / DSM 11879 / JCM 9820 / NBRC 100138 / K1).